A 1565-amino-acid chain; its full sequence is Major cell-surface adhesin PAc (1565 aa).

The N-terminal stretch at 1–38 is a signal peptide; it reads MKVKKTYGFRKSKISKTLCGAVLGTVAAVSVAGQKVFA. Over residues 42–54 the composition is skewed to low complexity; sequence TTTSDVDTKVVGT. The segment at 42 to 81 is disordered; that stretch reads TTTSDVDTKVVGTQTGNPATNLPEAQGSASKEAEQSQTKL. The segment covering 72-81 has biased composition (basic and acidic residues); that stretch reads KEAEQSQTKL. Ag I/II A repeat units follow at residues 146-220, 221-302, 303-384, and 385-466; these read KKTT…QKTN, AANQ…QEAN, AANE…KKAN, and AANE…QKDL. The interval 203–448 is heptad repeats of Y-[EQ]-X-X-L-A-X; it reads EAKLAQYQAD…KRNADAKADY (246 aa). Residues 461–834 are V-region (lectin-like); it reads KYQKDLADYP…VNVPKVTKEK (374 aa). Disordered stretches follow at residues 827–985 and 1486–1511; these read VPKV…PTPP and NTVK…PRTS. The stretch at 848–887 is one P1 repeat; the sequence is TYETEKPLKPAPVAPNYEKEPTPPTRTPDQAEPNKPTPPT. Residues 888–926 form a P2 repeat; the sequence is YETEKPLEPAPVEPSYEAEPTPPTRTPDQAEPNKPTPPT. A P3 repeat occupies 927–964; it reads YETEKPLEPAPVEPSYEAEPTPPTPTPDQPEPNKPVEP. The span at 946 to 961 shows a compositional bias: pro residues; sequence PTPPTPTPDQPEPNKP. An LPXTG sorting signal motif is present at residues 1532-1536; that stretch reads LPNTG. At Thr1535 the chain carries Pentaglycyl murein peptidoglycan amidated threonine. The propeptide at 1536-1565 is removed by sortase; sequence GVTNNAYMPLLGIIGLVTSFSLLGLKAKKD.

Belongs to the antigen I/II family.

The protein resides in the secreted. The protein localises to the cell wall. Functionally, surface protein antigen implicated in dental caries. The polypeptide is Major cell-surface adhesin PAc (Streptococcus mutans).